Consider the following 720-residue polypeptide: Transcription factor bHLH155 (720 aa).

The span at 522–534 (YPSSSSDQFQTSL) shows a compositional bias: polar residues. Positions 522–558 (YPSSSSDQFQTSLDIPKKNKKRAKPGESSRPRPRDRQ) are disordered. The short motif at 540-547 (NKKRAKPG) is the Nuclear localization signal element. One can recognise a bHLH domain in the interval 544 to 593 (AKPGESSRPRPRDRQLIQDRIKELRELVPNGSKCSIDSLLERTIKHMLFL). The segment covering 545–558 (KPGESSRPRPRDRQ) has biased composition (basic and acidic residues).

The protein belongs to the bHLH protein family. LHW subfamily. In terms of assembly, homodimer.

The protein resides in the nucleus. Its function is as follows. Transcription factor that may regulate root development. The polypeptide is Transcription factor bHLH155 (BHLH155) (Arabidopsis thaliana (Mouse-ear cress)).